The chain runs to 401 residues: 4-hydroxy-3-methylbut-2-en-1-yl diphosphate synthase (ferredoxin) (401 aa).

Cys-306, Cys-309, Cys-340, and Glu-347 together coordinate [4Fe-4S] cluster.

The protein belongs to the IspG family. [4Fe-4S] cluster serves as cofactor.

The catalysed reaction is (2E)-4-hydroxy-3-methylbut-2-enyl diphosphate + 2 oxidized [2Fe-2S]-[ferredoxin] + H2O = 2-C-methyl-D-erythritol 2,4-cyclic diphosphate + 2 reduced [2Fe-2S]-[ferredoxin] + H(+). Its pathway is isoprenoid biosynthesis; isopentenyl diphosphate biosynthesis via DXP pathway; isopentenyl diphosphate from 1-deoxy-D-xylulose 5-phosphate: step 5/6. In terms of biological role, converts 2C-methyl-D-erythritol 2,4-cyclodiphosphate (ME-2,4cPP) into 1-hydroxy-2-methyl-2-(E)-butenyl 4-diphosphate. This Synechococcus sp. (strain CC9902) protein is 4-hydroxy-3-methylbut-2-en-1-yl diphosphate synthase (ferredoxin).